A 457-amino-acid polypeptide reads, in one-letter code: Autophagy-related protein 14 (457 aa).

Positions 31–109 form a coiled coil; it reads RIENVMALIE…TRRAALSRRK (79 aa). 3 disordered regions span residues 54–73, 252–274, and 433–457; these read ETNA…QRTA, PSQA…VSRP, and NKNL…VKNR. Over residues 253 to 266 the composition is skewed to low complexity; sequence SQASVSSPSSTTDT.

It belongs to the ATG14 family. Component of the autophagy-specific VPS34 PI3-kinase complex I.

The protein resides in the preautophagosomal structure membrane. It is found in the vacuole membrane. In terms of biological role, required for cytoplasm to vacuole transport (Cvt) and autophagy as a part of the autophagy-specific VPS34 PI3-kinase complex I. This complex is essential to recruit the ATG8-phosphatidylinositol conjugate and the ATG12-ATG5 conjugate to the pre-autophagosomal structure. ATG14 mediates the specific binding of the VPS34 PI3-kinase complex I to the preautophagosomal structure (PAS). Autophagy is required for proper vegetative growth, asexual/sexual reproduction, and full virulence. Autophagy is particularly involved in the biosynthesis of deoxynivalenol (DON), an important virulence determinant. In Gibberella zeae (strain ATCC MYA-4620 / CBS 123657 / FGSC 9075 / NRRL 31084 / PH-1) (Wheat head blight fungus), this protein is Autophagy-related protein 14.